Consider the following 41-residue polypeptide: Large ribosomal subunit protein bL36 (41 aa).

This sequence belongs to the bacterial ribosomal protein bL36 family.

This chain is Large ribosomal subunit protein bL36, found in Rhodopseudomonas palustris (strain HaA2).